The primary structure comprises 181 residues: MKQLLDFLPLLVFFAVYKFFDIYAATGALIVATLIQLIATYALYKKIEKMHLITFALVASFGTATLIFHDDAFIKWKVTIVYALFAIALIAGQFLGKPILKSMLGQEMPVDDKIWARLTWYWVLFFVACGLINIYVAFSLSQETWVNFKVFGLTAATLVNTLLTVVYLFKHLPEDKKKELK.

The next 5 membrane-spanning stretches (helical) occupy residues 19–39 (FFDI…QLIA), 50–70 (MHLI…IFHD), 80–100 (IVYA…KPIL), 118–138 (LTWY…YVAF), and 148–168 (FKVF…VVYL).

Belongs to the YciB family.

It localises to the cell inner membrane. Functionally, plays a role in cell envelope biogenesis, maintenance of cell envelope integrity and membrane homeostasis. In Shewanella amazonensis (strain ATCC BAA-1098 / SB2B), this protein is Inner membrane-spanning protein YciB.